The following is a 381-amino-acid chain: Probable serine/threonine-protein kinase PBL25 (381 aa).

Cys-3 carries S-palmitoyl cysteine lipidation. The tract at residues 16-41 is disordered; it reads GSSMPAPYKQPNSPKRTTGEVVAKNA. Phosphothreonine is present on Thr-54. The Protein kinase domain occupies 65-342; the sequence is FRQECLIGEG…SDVITALSFL (278 aa). ATP-binding positions include 71-79 and Lys-94; that span reads IGEGGFGRV. Position 139 is a phosphotyrosine (Tyr-139). The active-site Proton acceptor is the Asp-192. 2 positions are modified to phosphoserine: Ser-196 and Ser-226. Position 232 is a phosphothreonine (Thr-232). Residue Tyr-240 is modified to Phosphotyrosine. The segment at 347 to 381 is disordered; sequence NSSNTGSNHLQQNRSNKYQDAVQWDSSPRYANSQM. The span at 355–381 shows a compositional bias: polar residues; it reads HLQQNRSNKYQDAVQWDSSPRYANSQM.

It belongs to the protein kinase superfamily. Ser/Thr protein kinase family.

The protein localises to the cell membrane. The enzyme catalyses L-seryl-[protein] + ATP = O-phospho-L-seryl-[protein] + ADP + H(+). The catalysed reaction is L-threonyl-[protein] + ATP = O-phospho-L-threonyl-[protein] + ADP + H(+). May be involved in plant defense signaling. In Arabidopsis thaliana (Mouse-ear cress), this protein is Probable serine/threonine-protein kinase PBL25.